A 245-amino-acid chain; its full sequence is Adenosylcobinamide-GDP ribazoletransferase (245 aa).

The next 5 membrane-spanning stretches (helical) occupy residues 31 to 51 (FGRA…VLYG), 61 to 81 (PLLQ…ALHL), 113 to 133 (AAVV…AALL), 138 to 158 (PGLL…LFLT), and 192 to 212 (LAFG…FAWL).

It belongs to the CobS family. Mg(2+) is required as a cofactor.

The protein localises to the cell inner membrane. The enzyme catalyses alpha-ribazole + adenosylcob(III)inamide-GDP = adenosylcob(III)alamin + GMP + H(+). The catalysed reaction is alpha-ribazole 5'-phosphate + adenosylcob(III)inamide-GDP = adenosylcob(III)alamin 5'-phosphate + GMP + H(+). It functions in the pathway cofactor biosynthesis; adenosylcobalamin biosynthesis; adenosylcobalamin from cob(II)yrinate a,c-diamide: step 7/7. Its function is as follows. Joins adenosylcobinamide-GDP and alpha-ribazole to generate adenosylcobalamin (Ado-cobalamin). Also synthesizes adenosylcobalamin 5'-phosphate from adenosylcobinamide-GDP and alpha-ribazole 5'-phosphate. The polypeptide is Adenosylcobinamide-GDP ribazoletransferase (Pseudomonas paraeruginosa (strain DSM 24068 / PA7) (Pseudomonas aeruginosa (strain PA7))).